Consider the following 368-residue polypeptide: tRNA-specific 2-thiouridylase MnmA (368 aa).

ATP-binding positions include Ala-12–Ser-19 and Met-38. Residue Cys-110 is the Nucleophile of the active site. Cys-110 and Cys-207 are joined by a disulfide. Position 134 (Gly-134) interacts with ATP. The interval Lys-157–Gln-159 is interaction with tRNA. Cys-207 (cysteine persulfide intermediate) is an active-site residue. Residues Arg-312–Tyr-313 are interaction with tRNA.

The protein belongs to the MnmA/TRMU family.

Its subcellular location is the cytoplasm. The catalysed reaction is S-sulfanyl-L-cysteinyl-[protein] + uridine(34) in tRNA + AH2 + ATP = 2-thiouridine(34) in tRNA + L-cysteinyl-[protein] + A + AMP + diphosphate + H(+). Its function is as follows. Catalyzes the 2-thiolation of uridine at the wobble position (U34) of tRNA, leading to the formation of s(2)U34. The chain is tRNA-specific 2-thiouridylase MnmA from Geobacter metallireducens (strain ATCC 53774 / DSM 7210 / GS-15).